The primary structure comprises 134 residues: Postmeiotic segregation increased 2-like protein 5 (134 aa).

Belongs to the DNA mismatch repair MutL/HexB family.

In Homo sapiens (Human), this protein is Postmeiotic segregation increased 2-like protein 5 (PMS2P5).